The chain runs to 106 residues: Large ribosomal subunit protein bL21 (106 aa).

Belongs to the bacterial ribosomal protein bL21 family. As to quaternary structure, part of the 50S ribosomal subunit. Contacts protein L20.

In terms of biological role, this protein binds to 23S rRNA in the presence of protein L20. This is Large ribosomal subunit protein bL21 from Xanthomonas euvesicatoria pv. vesicatoria (strain 85-10) (Xanthomonas campestris pv. vesicatoria).